The primary structure comprises 73 residues: Cell division protein ZapB (73 aa).

Positions 3–67 form a coiled coil; it reads LELLSKLETK…WNDKVTGLVG (65 aa).

The protein belongs to the ZapB family. Homodimer. The ends of the coiled-coil dimer bind to each other, forming polymers. Interacts with FtsZ.

Its subcellular location is the cytoplasm. In terms of biological role, non-essential, abundant cell division factor that is required for proper Z-ring formation. It is recruited early to the divisome by direct interaction with FtsZ, stimulating Z-ring assembly and thereby promoting cell division earlier in the cell cycle. Its recruitment to the Z-ring requires functional FtsA or ZipA. The sequence is that of Cell division protein ZapB from Shewanella sp. (strain ANA-3).